Reading from the N-terminus, the 309-residue chain is Foldase protein PrsA (309 aa).

A signal peptide spans 1 to 22; that stretch reads MKTRSKLAAGFLTLMSVATLAA. Cys23 carries N-palmitoyl cysteine lipidation. Cys23 is lipidated: S-diacylglycerol cysteine. The region spanning 146 to 241 is the PpiC domain; that stretch reads TPETSVQVIK…TSYYIIKVTD (96 aa).

This sequence belongs to the PrsA family.

The protein localises to the cell membrane. The enzyme catalyses [protein]-peptidylproline (omega=180) = [protein]-peptidylproline (omega=0). In terms of biological role, plays a major role in protein secretion by helping the post-translocational extracellular folding of several secreted proteins. The protein is Foldase protein PrsA of Streptococcus agalactiae serotype V (strain ATCC BAA-611 / 2603 V/R).